We begin with the raw amino-acid sequence, 704 residues long: Neutral ceramidase (704 aa).

An N-terminal signal peptide occupies residues 1–23 (MAISKIAFLALIALSGLCGLASA). Asn-230 carries an N-linked (GlcNAc...) asparagine glycan. Ser-276 functions as the Nucleophile in the catalytic mechanism. N-linked (GlcNAc...) asparagine glycosylation is found at Asn-362, Asn-550, and Asn-598.

It belongs to the neutral ceramidase family. Post-translationally, N-glycosylated.

Its subcellular location is the secreted. The enzyme catalyses an N-acylsphing-4-enine + H2O = sphing-4-enine + a fatty acid. Hydrolyzes the sphingolipid ceramide into sphingosine and free fatty acid at an optimal pH of 6.5-7.5. Acts as a key regulator of sphingolipid signaling metabolites by generating sphingosine at the cell surface. This Drosophila pseudoobscura pseudoobscura (Fruit fly) protein is Neutral ceramidase (CDase).